We begin with the raw amino-acid sequence, 135 residues long: uncharacterized protein (135 aa).

Residues 68–135 (DEVDNYIRVF…KKESEDEDEL (68 aa)) adopt a coiled-coil conformation. Residues 88-135 (EKIVGKPPKSTSAPDIDELEEEPDEETEEKSEEKTEKKKKESEDEDEL) are disordered. A compositionally biased stretch (acidic residues) spans 102 to 117 (DIDELEEEPDEETEEK). Basic and acidic residues predominate over residues 118-129 (SEEKTEKKKKES).

This is an uncharacterized protein from Acidianus hospitalis (AFV-1).